Here is a 178-residue protein sequence, read N- to C-terminus: Glutamyl-tRNA(Gln) amidotransferase subunit C, mitochondrial (178 aa).

Residues 1–31 (MFRHIFTLGPRSISAITVRSRRALSSTAKPV) constitute a mitochondrion transit peptide. Residues 26-67 (STAKPVSAPVTSDDRPNLDVKHLKHPTKVPQQPHKSDIDRRQ) are disordered. Residues 37-46 (SDDRPNLDVK) are compositionally biased toward basic and acidic residues.

Belongs to the GatC family. Subunit of the heterotrimeric GatCAB amidotransferase (AdT) complex, composed of A, B and C subunits.

It localises to the mitochondrion. It catalyses the reaction L-glutamyl-tRNA(Gln) + L-glutamine + ATP + H2O = L-glutaminyl-tRNA(Gln) + L-glutamate + ADP + phosphate + H(+). In terms of biological role, allows the formation of correctly charged Gln-tRNA(Gln) through the transamidation of misacylated Glu-tRNA(Gln) in the mitochondria. The reaction takes place in the presence of glutamine and ATP through an activated gamma-phospho-Glu-tRNA(Gln). The sequence is that of Glutamyl-tRNA(Gln) amidotransferase subunit C, mitochondrial from Aedes aegypti (Yellowfever mosquito).